Reading from the N-terminus, the 901-residue chain is Core protein VP3 (901 aa).

The protein belongs to the orbivirus VP3 family.

The protein resides in the virion. The VP3 protein is one of the five proteins (with VP1, VP4, VP6 and VP7) which form the inner capsid of the virus. The sequence is that of Core protein VP3 (Segment-3) from Antilocapra americana (Pronghorn).